A 645-amino-acid polypeptide reads, in one-letter code: 1-deoxy-D-xylulose-5-phosphate synthase (645 aa).

Residues His83 and 124 to 126 each bind thiamine diphosphate; that span reads GHS. Asp155 provides a ligand contact to Mg(2+). Residues 156-157, Asn184, Tyr295, and Glu376 contribute to the thiamine diphosphate site; that span reads GS. Asn184 provides a ligand contact to Mg(2+).

Belongs to the transketolase family. DXPS subfamily. As to quaternary structure, homodimer. Mg(2+) is required as a cofactor. It depends on thiamine diphosphate as a cofactor.

It catalyses the reaction D-glyceraldehyde 3-phosphate + pyruvate + H(+) = 1-deoxy-D-xylulose 5-phosphate + CO2. It participates in metabolic intermediate biosynthesis; 1-deoxy-D-xylulose 5-phosphate biosynthesis; 1-deoxy-D-xylulose 5-phosphate from D-glyceraldehyde 3-phosphate and pyruvate: step 1/1. Its function is as follows. Catalyzes the acyloin condensation reaction between C atoms 2 and 3 of pyruvate and glyceraldehyde 3-phosphate to yield 1-deoxy-D-xylulose-5-phosphate (DXP). The protein is 1-deoxy-D-xylulose-5-phosphate synthase of Desulfotalea psychrophila (strain LSv54 / DSM 12343).